A 327-amino-acid polypeptide reads, in one-letter code: L-serine dehydratase/L-threonine deaminase (327 aa).

Ala-2 bears the N-acetylalanine mark. Position 41 is an N6-(pyridoxal phosphate)lysine (Lys-41). Pyridoxal 5'-phosphate is bound at residue Pro-128.

The protein belongs to the serine/threonine dehydratase family. In terms of assembly, homodimer. Pyridoxal 5'-phosphate is required as a cofactor.

The protein localises to the cytoplasm. The catalysed reaction is L-serine = pyruvate + NH4(+). It catalyses the reaction L-threonine = 2-oxobutanoate + NH4(+). It participates in carbohydrate biosynthesis; gluconeogenesis. Catalyzes the pyridoxal-phosphate-dependent dehydrative deamination of L-threonine and L-serine to ammonia and alpha-ketobutyrate and pyruvate, respectively. The chain is L-serine dehydratase/L-threonine deaminase (Sds) from Mus musculus (Mouse).